A 527-amino-acid polypeptide reads, in one-letter code: EGF domain-specific O-linked N-acetylglucosamine transferase (527 aa).

Positions 1-17 (MLMLFVFGVLLHEVSLS) are cleaved as a signal peptide. The Required for optimal activity signature appears at 295–297 (DYD). A glycan (N-linked (GlcNAc...) asparagine) is linked at Asn354. The Prevents secretion from ER signature appears at 524 to 527 (HDEL).

Belongs to the glycosyltransferase 61 family.

The protein localises to the endoplasmic reticulum lumen. The enzyme catalyses L-seryl-[protein] + UDP-N-acetyl-alpha-D-glucosamine = 3-O-(N-acetyl-beta-D-glucosaminyl)-L-seryl-[protein] + UDP + H(+). The catalysed reaction is L-threonyl-[protein] + UDP-N-acetyl-alpha-D-glucosamine = 3-O-(N-acetyl-beta-D-glucosaminyl)-L-threonyl-[protein] + UDP + H(+). Catalyzes the transfer of a single N-acetylglucosamine from UDP-GlcNAc to a serine or threonine residue in extracellular proteins resulting in their modification with a beta-linked N-acetylglucosamine (O-GlcNAc). Specifically glycosylates the Thr residue located between the fifth and sixth conserved cysteines of folded EGF-like domains. The chain is EGF domain-specific O-linked N-acetylglucosamine transferase (EOGT) from Pan troglodytes (Chimpanzee).